Consider the following 216-residue polypeptide: ATP-dependent Clp protease proteolytic subunit (216 aa).

S101 acts as the Nucleophile in catalysis. H126 is an active-site residue.

The protein belongs to the peptidase S14 family. As to quaternary structure, component of the chloroplastic Clp protease core complex.

It localises to the plastid. The protein resides in the chloroplast stroma. The catalysed reaction is Hydrolysis of proteins to small peptides in the presence of ATP and magnesium. alpha-casein is the usual test substrate. In the absence of ATP, only oligopeptides shorter than five residues are hydrolyzed (such as succinyl-Leu-Tyr-|-NHMec, and Leu-Tyr-Leu-|-Tyr-Trp, in which cleavage of the -Tyr-|-Leu- and -Tyr-|-Trp bonds also occurs).. Its function is as follows. Cleaves peptides in various proteins in a process that requires ATP hydrolysis. Has a chymotrypsin-like activity. Plays a major role in the degradation of misfolded proteins. The polypeptide is ATP-dependent Clp protease proteolytic subunit (Saccharum hybrid (Sugarcane)).